Here is a 1084-residue protein sequence, read N- to C-terminus: Putative tRNA-specific 2-thiouridylase (1084 aa).

3 helical membrane passes run 1-21 (MLIFFFFFFFFKYIYNIFILT), 32-52 (FIISFIFSTLMFFYFCTFYVI), and 309-329 (IITIDAYSNNLILYCFLYLIL). Catalysis depends on Cys538, which acts as the Nucleophile. Cysteines 538 and 715 form a disulfide. Cys715 acts as the Cysteine persulfide intermediate in catalysis.

It belongs to the MnmA/TRMU family.

It localises to the plastid. It is found in the apicoplast. The protein resides in the membrane. It carries out the reaction S-sulfanyl-L-cysteinyl-[protein] + uridine(34) in tRNA + AH2 + ATP = 2-thiouridine(34) in tRNA + L-cysteinyl-[protein] + A + AMP + diphosphate + H(+). Catalyzes the 2-thiolation of uridine at the wobble position (U34) of tRNA, leading to the formation of s(2)U34. Required for apicoplast maintenance. The chain is Putative tRNA-specific 2-thiouridylase from Plasmodium falciparum (isolate 3D7).